The following is a 130-amino-acid chain: L-ectoine synthase (130 aa).

The protein belongs to the ectoine synthase family.

It catalyses the reaction (2S)-4-acetamido-2-aminobutanoate = L-ectoine + H2O. The protein operates within amine and polyamine biosynthesis; ectoine biosynthesis; L-ectoine from L-aspartate 4-semialdehyde: step 3/3. In terms of biological role, catalyzes the circularization of gamma-N-acetyl-alpha,gamma-diaminobutyric acid (ADABA) to ectoine (1,4,5,6-tetrahydro-2-methyl-4-pyrimidine carboxylic acid), which is an excellent osmoprotectant. In Mycobacteroides abscessus (strain ATCC 19977 / DSM 44196 / CCUG 20993 / CIP 104536 / JCM 13569 / NCTC 13031 / TMC 1543 / L948) (Mycobacterium abscessus), this protein is L-ectoine synthase.